The sequence spans 443 residues: SURP and G-patch domain-containing protein 1-like protein (443 aa).

2 disordered regions span residues 45-71 and 83-141; these read IISN…KGGK and LAPP…TVKK. One copy of the SURP motif repeat lies at 142–185; it reads VADKLASFVAKHGRPFEHITRQKNPGDTPFKFLFDENCADYKYY. Disordered stretches follow at residues 198 to 221, 241 to 272, and 285 to 325; these read QTKD…AIPL, TPVE…RGAD, and AQEE…HHMG. The span at 248-265 shows a compositional bias: polar residues; that stretch reads SSRSAQASITRPSDSDSF. Basic and acidic residues predominate over residues 285–300; sequence AQEEKMRRPRQSKDEM. Polar residues predominate over residues 307–316; the sequence is QGPSETSSTD. Positions 360 to 407 constitute a G-patch domain; sequence ADNVGHKLLSKMGWKEGEGIGSSRKGMADPIMAGDVKTNNLGVGASAP.

The protein resides in the nucleus. The chain is SURP and G-patch domain-containing protein 1-like protein from Arabidopsis thaliana (Mouse-ear cress).